Reading from the N-terminus, the 368-residue chain is Zinc finger protein 24 (368 aa).

Lys22 is covalently cross-linked (Glycyl lysine isopeptide (Lys-Gly) (interchain with G-Cter in SUMO2)). Lys27 is covalently cross-linked (Glycyl lysine isopeptide (Lys-Gly) (interchain with G-Cter in SUMO1); alternate). A Glycyl lysine isopeptide (Lys-Gly) (interchain with G-Cter in SUMO2); alternate cross-link involves residue Lys27. The SCAN box domain maps to Arg52–Leu134. Residues Ser132 and Ser142 each carry the phosphoserine modification. Glycyl lysine isopeptide (Lys-Gly) (interchain with G-Cter in SUMO2) cross-links involve residues Lys147, Lys177, and Lys236. The segment at His251–His273 adopts a C2H2-type 1 zinc-finger fold. Residues His251 to His301 form a necessary and sufficient for nuclear localization region. Ser274 is modified (phosphoserine). Residues Lys277 and Lys286 each participate in a glycyl lysine isopeptide (Lys-Gly) (interchain with G-Cter in SUMO2) cross-link. 3 consecutive C2H2-type zinc fingers follow at residues Tyr279–His301, Tyr307–His329, and Tyr335–His357. Ser292 is subject to Phosphoserine. Tyr335 carries the post-translational modification Phosphotyrosine. Glycyl lysine isopeptide (Lys-Gly) (interchain with G-Cter in SUMO2) cross-links involve residues Lys361 and Lys367.

The protein belongs to the krueppel C2H2-type zinc-finger protein family. Sumoylated.

Its subcellular location is the nucleus. Transcription factor required for myelination of differentiated oligodendrocytes. Required for the conversion of oligodendrocytes from the premyelinating to the myelinating state. In the developing central nervous system (CNS), involved in the maintenance in the progenitor stage by promoting the cell cycle. Specifically binds to the 5'-TCAT-3' DNA sequence. Has transcription repressor activity in vitro. The polypeptide is Zinc finger protein 24 (ZNF24) (Pan troglodytes (Chimpanzee)).